Here is a 283-residue protein sequence, read N- to C-terminus: Thymidylate synthase (283 aa).

Arginine 22 is a binding site for dUMP. Cysteine 160 functions as the Nucleophile in the catalytic mechanism. DUMP-binding positions include 180–183 (RSCD), asparagine 191, and 221–223 (HIY). Aspartate 183 serves as a coordination point for (6R)-5,10-methylene-5,6,7,8-tetrahydrofolate. Serine 282 serves as a coordination point for (6R)-5,10-methylene-5,6,7,8-tetrahydrofolate.

Belongs to the thymidylate synthase family. Bacterial-type ThyA subfamily. Homodimer.

It localises to the cytoplasm. The catalysed reaction is dUMP + (6R)-5,10-methylene-5,6,7,8-tetrahydrofolate = 7,8-dihydrofolate + dTMP. The protein operates within pyrimidine metabolism; dTTP biosynthesis. Its function is as follows. Catalyzes the reductive methylation of 2'-deoxyuridine-5'-monophosphate (dUMP) to 2'-deoxythymidine-5'-monophosphate (dTMP) while utilizing 5,10-methylenetetrahydrofolate (mTHF) as the methyl donor and reductant in the reaction, yielding dihydrofolate (DHF) as a by-product. This enzymatic reaction provides an intracellular de novo source of dTMP, an essential precursor for DNA biosynthesis. The protein is Thymidylate synthase of Vibrio parahaemolyticus serotype O3:K6 (strain RIMD 2210633).